The chain runs to 370 residues: MKERQRWRPEEDAVLRAYVRQYGPREWHLVSQRMNVALDRDAKSCLERWKNYLRPGIKKGSLTEEEQRLVIRLQAKHGNKWKKIAAEVPGRTAKRLGKWWEVFKEKQQRELRDSRRPPPEPSPDERGRYEWLLENFAEKLVGERPQQAAAAPSPLLMAAPVLPPWLSSNAGPAAAAAAAVAHPPPRPPSPSVTLSLASAAVAPGPPAPAPWMPDRAAADAAPYGFPSPSQHGGAAPPGMAVVDGQALAELAECCRELEEGRRAWAAHRREAAWRLKRVEQQLEMEREMRRREVWEEFEAKMRTMRLEQAAAAERVERDHREKVAELRRDAQVKEEKMAEQWAAKHARVAKFVEQMGGCSRSWSSATDMNC.

2 consecutive HTH myb-type domains span residues 1-53 (MKER…KNYL) and 54-108 (RPGI…EKQQ). DNA-binding regions (H-T-H motif) lie at residues 27-53 (WHLV…KNYL) and 81-104 (WKKI…EVFK). The segment at 107 to 129 (QQRELRDSRRPPPEPSPDERGRY) is disordered. A coiled-coil region spans residues 276-340 (KRVEQQLEME…QVKEEKMAEQ (65 aa)).

In terms of assembly, homodimer. Interacts with AS2, WRKY1, HIRA, a probable histone chaperone, and RIK, a predicted RNA binding protein. As to expression, expressed in lateral organ promordia.

Its subcellular location is the nucleus. Transcription factor required for normal cell differentiation. Interacts directly with asymmetric leaves 2 (AS2) to repress the knox homeobox genes. This is Protein rough sheath 2 (RS2) from Zea mays (Maize).